The sequence spans 251 residues: Triosephosphate isomerase (251 aa).

Residue 12–14 (NWK) coordinates substrate. Histidine 98 (electrophile) is an active-site residue. Glutamate 168 functions as the Proton acceptor in the catalytic mechanism. Residues glycine 174, serine 213, and 234–235 (GG) contribute to the substrate site.

Belongs to the triosephosphate isomerase family. As to quaternary structure, homodimer.

It localises to the cytoplasm. It catalyses the reaction D-glyceraldehyde 3-phosphate = dihydroxyacetone phosphate. Its pathway is carbohydrate biosynthesis; gluconeogenesis. The protein operates within carbohydrate degradation; glycolysis; D-glyceraldehyde 3-phosphate from glycerone phosphate: step 1/1. In terms of biological role, involved in the gluconeogenesis. Catalyzes stereospecifically the conversion of dihydroxyacetone phosphate (DHAP) to D-glyceraldehyde-3-phosphate (G3P). The chain is Triosephosphate isomerase from Bradyrhizobium diazoefficiens (strain JCM 10833 / BCRC 13528 / IAM 13628 / NBRC 14792 / USDA 110).